Here is a 631-residue protein sequence, read N- to C-terminus: 1-deoxy-D-xylulose-5-phosphate synthase (631 aa).

Thiamine diphosphate-binding positions include His-73 and 114 to 116 (GHS). Residue Asp-145 coordinates Mg(2+). Residues 146–147 (GA), Asn-174, Tyr-285, and Glu-366 each bind thiamine diphosphate. Asn-174 serves as a coordination point for Mg(2+).

It belongs to the transketolase family. DXPS subfamily. Homodimer. The cofactor is Mg(2+). Thiamine diphosphate serves as cofactor.

The enzyme catalyses D-glyceraldehyde 3-phosphate + pyruvate + H(+) = 1-deoxy-D-xylulose 5-phosphate + CO2. It functions in the pathway metabolic intermediate biosynthesis; 1-deoxy-D-xylulose 5-phosphate biosynthesis; 1-deoxy-D-xylulose 5-phosphate from D-glyceraldehyde 3-phosphate and pyruvate: step 1/1. In terms of biological role, catalyzes the acyloin condensation reaction between C atoms 2 and 3 of pyruvate and glyceraldehyde 3-phosphate to yield 1-deoxy-D-xylulose-5-phosphate (DXP). This Desulfitobacterium hafniense (strain DSM 10664 / DCB-2) protein is 1-deoxy-D-xylulose-5-phosphate synthase.